The chain runs to 494 residues: Glutamate decarboxylase 5 (494 aa).

Lys-276 is subject to N6-(pyridoxal phosphate)lysine.

Belongs to the group II decarboxylase family. In terms of assembly, homohexamer. Interacts with calmodulin. Pyridoxal 5'-phosphate is required as a cofactor. As to expression, expressed in flowers.

It catalyses the reaction L-glutamate + H(+) = 4-aminobutanoate + CO2. In terms of biological role, catalyzes the production of GABA. The calmodulin-binding is calcium-dependent and it is proposed that this may, directly or indirectly, form a calcium regulated control of GABA biosynthesis. In Arabidopsis thaliana (Mouse-ear cress), this protein is Glutamate decarboxylase 5 (GAD5).